Reading from the N-terminus, the 293-residue chain is Fructokinase (293 aa).

Threonine 133 lines the ATP pocket. Positions 156, 174, 177, and 180 each coordinate Zn(2+). ATP contacts are provided by residues proline 188 and 236-240; that span reads GVMAQ.

Belongs to the ROK (NagC/XylR) family. The cofactor is Mg(2+).

The enzyme catalyses D-fructose + ATP = D-fructose 6-phosphate + ADP + H(+). With respect to regulation, inhibition by zinc ions. This Streptococcus mutans serotype c (strain ATCC 700610 / UA159) protein is Fructokinase (scrK).